The primary structure comprises 549 residues: Probable acyl-activating enzyme 10 (549 aa).

The protein belongs to the ATP-dependent AMP-binding enzyme family. In terms of tissue distribution, expressed at low levels in roots.

Its function is as follows. May act as an acid--thiol ligase that activates carboxylic acids by forming acyl-CoAs. This is Probable acyl-activating enzyme 10 (AEE10) from Arabidopsis thaliana (Mouse-ear cress).